The sequence spans 145 residues: Large ribosomal subunit protein uL13 (145 aa).

The protein belongs to the universal ribosomal protein uL13 family. As to quaternary structure, part of the 50S ribosomal subunit.

Functionally, this protein is one of the early assembly proteins of the 50S ribosomal subunit, although it is not seen to bind rRNA by itself. It is important during the early stages of 50S assembly. The polypeptide is Large ribosomal subunit protein uL13 (Exiguobacterium sibiricum (strain DSM 17290 / CCUG 55495 / CIP 109462 / JCM 13490 / 255-15)).